We begin with the raw amino-acid sequence, 458 residues long: ATP synthase subunit beta (458 aa).

148-155 (GGAGVGKT) is an ATP binding site.

This sequence belongs to the ATPase alpha/beta chains family. In terms of assembly, F-type ATPases have 2 components, CF(1) - the catalytic core - and CF(0) - the membrane proton channel. CF(1) has five subunits: alpha(3), beta(3), gamma(1), delta(1), epsilon(1). CF(0) has three main subunits: a(1), b(2) and c(9-12). The alpha and beta chains form an alternating ring which encloses part of the gamma chain. CF(1) is attached to CF(0) by a central stalk formed by the gamma and epsilon chains, while a peripheral stalk is formed by the delta and b chains.

The protein localises to the cell inner membrane. It carries out the reaction ATP + H2O + 4 H(+)(in) = ADP + phosphate + 5 H(+)(out). In terms of biological role, produces ATP from ADP in the presence of a proton gradient across the membrane. The catalytic sites are hosted primarily by the beta subunits. This is ATP synthase subunit beta from Pseudomonas putida (strain ATCC 700007 / DSM 6899 / JCM 31910 / BCRC 17059 / LMG 24140 / F1).